We begin with the raw amino-acid sequence, 300 residues long: Jacalin-related lectin 33 (300 aa).

The tract at residues 1-20 (MAQKVEAGGGAGGASWDDGV) is disordered. The residue at position 2 (Ala-2) is an N-acetylalanine. Jacalin-type lectin domains follow at residues 2-146 (AQKV…YFAT) and 154-297 (AKKL…HVMP).

This sequence belongs to the jacalin lectin family. Component of the PYK10 complex, at least composed of PYK10/BGLU23, BGLU21, BGLU22, JAL22, JAL23, PBP1/JAL30, PBP2/JAL31, JAL32, JAL33, JAL34, JAL35, GLL22 and GLL23.

Functionally, sugar-binding protein showing significant affinity for (Glc alpha(1-4)Glc)(3) maltohexaose, (Glc alpha(1-6)Glc)(3) isomaltohexaose, Gal alpha(1-4)Gal beta(1-4)Glc, GalNAc alpha(1-3)(Fuc alpha(1-2)) and Gal beta(1-3)(Fuc alpha(1-4))GlcNAc beta(1-3)Gal beta(1-4)Glc. In Arabidopsis thaliana (Mouse-ear cress), this protein is Jacalin-related lectin 33 (JAL33).